Consider the following 290-residue polypeptide: 4-diphosphocytidyl-2-C-methyl-D-erythritol kinase (290 aa).

Residue K13 is part of the active site. 96–106 (PMGGGIGGGSS) contacts ATP. The active site involves D138.

Belongs to the GHMP kinase family. IspE subfamily.

It catalyses the reaction 4-CDP-2-C-methyl-D-erythritol + ATP = 4-CDP-2-C-methyl-D-erythritol 2-phosphate + ADP + H(+). Its pathway is isoprenoid biosynthesis; isopentenyl diphosphate biosynthesis via DXP pathway; isopentenyl diphosphate from 1-deoxy-D-xylulose 5-phosphate: step 3/6. Functionally, catalyzes the phosphorylation of the position 2 hydroxy group of 4-diphosphocytidyl-2C-methyl-D-erythritol. This is 4-diphosphocytidyl-2-C-methyl-D-erythritol kinase from Vibrio vulnificus (strain CMCP6).